The following is a 232-amino-acid chain: Small ribosomal subunit protein uS3 (232 aa).

The KH type-2 domain maps to 39–107; that stretch reads VRQFLTKELS…PAQINIAEVR (69 aa).

This sequence belongs to the universal ribosomal protein uS3 family. In terms of assembly, part of the 30S ribosomal subunit. Forms a tight complex with proteins S10 and S14.

In terms of biological role, binds the lower part of the 30S subunit head. Binds mRNA in the 70S ribosome, positioning it for translation. The chain is Small ribosomal subunit protein uS3 from Sodalis glossinidius (strain morsitans).